The following is a 226-amino-acid chain: Killer cell lectin-like receptor subfamily E member 1 (226 aa).

The interval 1-28 (MDEAPVTRSTLNVNSQQKSKAKNKIKNT) is disordered. Over 1–68 (MDEAPVTRST…GKGNCSPPWR (68 aa)) the chain is Cytoplasmic. A compositionally biased stretch (polar residues) spans 7–18 (TRSTLNVNSQQK). Residues 69–89 (LLSSVLGAMCLLLMAVAMVMT) traverse the membrane as a helical; Signal-anchor for type II membrane protein segment. Residues 90 to 226 (TFTTKSSSER…ANKLTYICKK (137 aa)) lie on the Extracellular side of the membrane. 3 disulfide bridges follow: Cys113-Cys124, Cys141-Cys224, and Cys202-Cys216. The 106-residue stretch at 120 to 225 (FRCSCYFFSK…CANKLTYICK (106 aa)) folds into the C-type lectin domain. Asn145 carries an N-linked (GlcNAc...) asparagine glycan.

Heterodimer; with KLRI1 or KLRI2. Expressed in natural killer (NK) cells (at protein level). Also detected in natural killer T (NKT) cells (at protein level). Has little or no expression in T cells (at protein level).

The protein resides in the cell membrane. Functionally, lectin-like receptor for natural killer (NK) cells. Can either inhibit or activate NK cell cytotoxic activity, depending on its binding partner. Heterodimer formation with KLRI1 mediates NK cell inhibition whereas heterodimer formation with KLRI2 mediates NK cell activation. Plays a role in allogeneic recognition by the immune system. This Mus musculus (Mouse) protein is Killer cell lectin-like receptor subfamily E member 1.